Here is a 478-residue protein sequence, read N- to C-terminus: Probable cytosol aminopeptidase (478 aa).

Mn(2+)-binding residues include Lys244 and Asp249. Lys256 is an active-site residue. Residues Asp267, Asp326, and Glu328 each contribute to the Mn(2+) site. Arg330 is an active-site residue.

The protein belongs to the peptidase M17 family. Mn(2+) is required as a cofactor.

The protein resides in the cytoplasm. The catalysed reaction is Release of an N-terminal amino acid, Xaa-|-Yaa-, in which Xaa is preferably Leu, but may be other amino acids including Pro although not Arg or Lys, and Yaa may be Pro. Amino acid amides and methyl esters are also readily hydrolyzed, but rates on arylamides are exceedingly low.. The enzyme catalyses Release of an N-terminal amino acid, preferentially leucine, but not glutamic or aspartic acids.. Its function is as follows. Presumably involved in the processing and regular turnover of intracellular proteins. Catalyzes the removal of unsubstituted N-terminal amino acids from various peptides. This chain is Probable cytosol aminopeptidase, found in Fusobacterium nucleatum subsp. nucleatum (strain ATCC 25586 / DSM 15643 / BCRC 10681 / CIP 101130 / JCM 8532 / KCTC 2640 / LMG 13131 / VPI 4355).